The primary structure comprises 858 residues: DNA mismatch repair protein MutS (858 aa).

Residue 609 to 616 (GPNMSGKS) coordinates ATP.

The protein belongs to the DNA mismatch repair MutS family.

This protein is involved in the repair of mismatches in DNA. It is possible that it carries out the mismatch recognition step. This protein has a weak ATPase activity. The protein is DNA mismatch repair protein MutS of Enterococcus faecalis (strain ATCC 700802 / V583).